A 382-amino-acid polypeptide reads, in one-letter code: Lipid-A-disaccharide synthase (382 aa).

The protein belongs to the LpxB family.

The enzyme catalyses 2-N,3-O-bis[(3R)-3-hydroxytetradecanoyl]-alpha-D-glucosaminyl 1-phosphate + UDP-2-N,3-O-bis[(3R)-3-hydroxytetradecanoyl]-alpha-D-glucosamine = lipid A disaccharide (E. coli) + UDP + H(+). It catalyses the reaction a lipid X + a UDP-2-N,3-O-bis[(3R)-3-hydroxyacyl]-alpha-D-glucosamine = a lipid A disaccharide + UDP + H(+). It participates in glycolipid biosynthesis; lipid IV(A) biosynthesis; lipid IV(A) from (3R)-3-hydroxytetradecanoyl-[acyl-carrier-protein] and UDP-N-acetyl-alpha-D-glucosamine: step 5/6. Condensation of UDP-2,3-diacylglucosamine and 2,3-diacylglucosamine-1-phosphate to form lipid A disaccharide, a precursor of lipid A, a phosphorylated glycolipid that anchors the lipopolysaccharide to the outer membrane of the cell. The chain is Lipid-A-disaccharide synthase from Escherichia coli O17:K52:H18 (strain UMN026 / ExPEC).